The primary structure comprises 363 residues: UDP-3-O-acylglucosamine N-acyltransferase (363 aa).

His-266 serves as the catalytic Proton acceptor.

This sequence belongs to the transferase hexapeptide repeat family. LpxD subfamily. As to quaternary structure, homotrimer.

The catalysed reaction is a UDP-3-O-[(3R)-3-hydroxyacyl]-alpha-D-glucosamine + a (3R)-hydroxyacyl-[ACP] = a UDP-2-N,3-O-bis[(3R)-3-hydroxyacyl]-alpha-D-glucosamine + holo-[ACP] + H(+). It participates in bacterial outer membrane biogenesis; LPS lipid A biosynthesis. Its function is as follows. Catalyzes the N-acylation of UDP-3-O-acylglucosamine using 3-hydroxyacyl-ACP as the acyl donor. Is involved in the biosynthesis of lipid A, a phosphorylated glycolipid that anchors the lipopolysaccharide to the outer membrane of the cell. The polypeptide is UDP-3-O-acylglucosamine N-acyltransferase (Bordetella pertussis (strain Tohama I / ATCC BAA-589 / NCTC 13251)).